The primary structure comprises 162 residues: 2-C-methyl-D-erythritol 2,4-cyclodiphosphate synthase (162 aa).

Residues D12 and H14 each coordinate a divalent metal cation. 4-CDP-2-C-methyl-D-erythritol 2-phosphate contacts are provided by residues 12 to 14 (DVH) and 38 to 39 (HS). Residue H46 participates in a divalent metal cation binding. 4-CDP-2-C-methyl-D-erythritol 2-phosphate contacts are provided by residues 60-62 (DIG), 136-139 (TTTE), F143, and R146.

Belongs to the IspF family. Homotrimer. The cofactor is a divalent metal cation.

It carries out the reaction 4-CDP-2-C-methyl-D-erythritol 2-phosphate = 2-C-methyl-D-erythritol 2,4-cyclic diphosphate + CMP. Its pathway is isoprenoid biosynthesis; isopentenyl diphosphate biosynthesis via DXP pathway; isopentenyl diphosphate from 1-deoxy-D-xylulose 5-phosphate: step 4/6. In terms of biological role, involved in the biosynthesis of isopentenyl diphosphate (IPP) and dimethylallyl diphosphate (DMAPP), two major building blocks of isoprenoid compounds. Catalyzes the conversion of 4-diphosphocytidyl-2-C-methyl-D-erythritol 2-phosphate (CDP-ME2P) to 2-C-methyl-D-erythritol 2,4-cyclodiphosphate (ME-CPP) with a corresponding release of cytidine 5-monophosphate (CMP). The chain is 2-C-methyl-D-erythritol 2,4-cyclodiphosphate synthase from Porphyromonas gingivalis (strain ATCC BAA-308 / W83).